Reading from the N-terminus, the 498-residue chain is ATP synthase subunit beta, chloroplastic (498 aa).

An ATP-binding site is contributed by 172–179 (GGAGVGKT).

Belongs to the ATPase alpha/beta chains family. In terms of assembly, F-type ATPases have 2 components, CF(1) - the catalytic core - and CF(0) - the membrane proton channel. CF(1) has five subunits: alpha(3), beta(3), gamma(1), delta(1), epsilon(1). CF(0) has four main subunits: a(1), b(1), b'(1) and c(9-12).

The protein localises to the plastid. The protein resides in the chloroplast thylakoid membrane. It catalyses the reaction ATP + H2O + 4 H(+)(in) = ADP + phosphate + 5 H(+)(out). In terms of biological role, produces ATP from ADP in the presence of a proton gradient across the membrane. The catalytic sites are hosted primarily by the beta subunits. In Solanum bulbocastanum (Wild potato), this protein is ATP synthase subunit beta, chloroplastic.